A 538-amino-acid chain; its full sequence is MKQSSPEPLRPRRTGGRGGARRAAALVTIPLLPMTLLGASPALADASGARLTELREDIDAILEDPALEGAVSGVVVVDTATGEELYSRDGGEQLLPASNMKLFTAAAALEVLGADHSFGTEVAAESAPGRRGEVQDLYLVGRGDPTLSAEDLDAMAAEVAASGVRTVRGDLYADDTWFDSERLVDDWWPEDEPYAYSAQISALTVAHGERFDTGVTEVSVTPAAEGEPADVDLGAAEGYAELDNRAVTGAAGSANTLVIDRPVGTNTIAVTGSLPADAAPVTALRTVDEPAALAGHLFEEALESNGVTVKGDVGLGGVPADWQDAEVLADHTSAELSEILVPFMKFSNNGHAEMLVKSIGQETAGAGTWDAGLVGVEEALSGLGVDTAGLVLNDGSGLSRGNLVTADTVVDLLGQAGSAPWAQTWSASLPVAGESDPFVGGTLANRMRGTAAEGVVEAKTGTMSGVSALSGYVPGPEGELAFSIVNNGHSGPAPLAVQDAIAVRLAEYAGHQAPEGARMMRGPVQGSGELECSWVQAC.

The segment at 1 to 21 is disordered; it reads MKQSSPEPLRPRRTGGRGGAR. Positions 1 to 49 are cleaved as a signal peptide; that stretch reads MKQSSPEPLRPRRTGGRGGARRAAALVTIPLLPMTLLGASPALADASGA. The Acyl-ester intermediate role is filled by Ser98. The Proton acceptor role is filled by Lys101. Positions 146–319 are absent in class-A beta-lactamases; sequence TLSAEDLDAM…KGDVGLGGVP (174 aa). Ser347 is an active-site residue. Lys459 is a substrate binding site. The propeptide at 516-538 is removed in mature form; the sequence is GARMMRGPVQGSGELECSWVQAC.

Belongs to the peptidase S13 family.

Its subcellular location is the secreted. The enzyme catalyses Preferential cleavage: (Ac)2-L-Lys-D-Ala-|-D-Ala. Also transpeptidation of peptidyl-alanyl moieties that are N-acyl substituents of D-alanine.. The protein operates within cell wall biogenesis; peptidoglycan biosynthesis. With respect to regulation, inhibited by benzylpenicillin, cephaloridine, ampicillin and cetiofur. Its function is as follows. Removes C-terminal D-alanyl residues from sugar-peptide cell wall precursors. The sequence is that of D-alanyl-D-alanine carboxypeptidase (dac) from Actinomadura sp. (strain R39).